The chain runs to 192 residues: Glycerol-3-phosphate acyltransferase (192 aa).

5 helical membrane-spanning segments follow: residues 1–21, 51–71, 78–98, 112–132, and 155–175; these read MTSA…GVLL, LGAV…VLAV, PTVH…PVWL, VLLV…VAVF, and LTAR…LMLW.

The protein belongs to the PlsY family. As to quaternary structure, probably interacts with PlsX.

Its subcellular location is the cell inner membrane. The catalysed reaction is an acyl phosphate + sn-glycerol 3-phosphate = a 1-acyl-sn-glycero-3-phosphate + phosphate. Its pathway is lipid metabolism; phospholipid metabolism. Its function is as follows. Catalyzes the transfer of an acyl group from acyl-phosphate (acyl-PO(4)) to glycerol-3-phosphate (G3P) to form lysophosphatidic acid (LPA). This enzyme utilizes acyl-phosphate as fatty acyl donor, but not acyl-CoA or acyl-ACP. This is Glycerol-3-phosphate acyltransferase from Myxococcus xanthus (strain DK1622).